The chain runs to 110 residues: Multidrug transporter EmrE (110 aa).

Transmembrane regions (helical) follow at residues 4 to 21 (YIYL…TTLM), 34 to 52 (VGTI…QTLA), 58 to 80 (IAYA…GFFG), and 87 to 104 (AIIG…INLL).

This sequence belongs to the drug/metabolite transporter (DMT) superfamily. Small multidrug resistance (SMR) (TC 2.A.7.1) family. Homodimer. Forms an antiparallel dimeric structure. Also forms dimers of homodimers.

The protein localises to the cell inner membrane. Its activity is regulated as follows. Substrate identity influences both the ground-state and transition-state energies for the conformational exchange process, emphasizing the coupling between substrate binding and transport. In terms of biological role, multidrug efflux protein that confers resistance to a wide range of toxic compounds, including ethidium, methyl viologen, acriflavine, tetraphenylphosphonium (TPP(+)), benzalkonium, propidium, dequalinium and the aminoglycoside antibiotics streptomycin and tobramycin. Can also transport the osmoprotectants betaine and choline. The drug efflux is coupled to an influx of protons. Can couple antiport of a drug to either one or two protons, performing both electrogenic and electroneutral transport of a single substrate. Simultaneously binds and cotransports proton and drug. In Escherichia coli (strain K12), this protein is Multidrug transporter EmrE (emrE).